Consider the following 640-residue polypeptide: Guanylate-binding protein 4 (640 aa).

The GTPase domain (Globular) stretch occupies residues 1–325 (MGERTLHAAV…DAINSGAVPC (325 aa)). Positions 50–292 (SQPVVVVAIV…FCSYIFTHAK (243 aa)) constitute a GB1/RHD3-type G domain. GTP is bound by residues 60–67 (GLYRTGKS), 82–84 (LGS), and 112–116 (DTEGL). Positions 499 to 612 (GEKAIAAERA…EQLRLLKILD (114 aa)) form a coiled coil.

Belongs to the TRAFAC class dynamin-like GTPase superfamily. GB1/RHD3 GTPase family. GB1 subfamily. Heterodimer with other family members, including GBP1, GBP2 and GBP5. Dimerization regulates subcellular location. Interacts with IRF7; preventing interaction between TRAF6 and IRF7, resulting in impaired TRAF6-mediated IRF7 ubiquitination. (Microbial infection) Ubiquitinated by S.flexneri IpaH9.8, leading to its degradation by the proteasome, thereby preventing its ability to promote host defense against bacterial infection.

The protein resides in the golgi apparatus membrane. The protein localises to the cytoplasm. Its subcellular location is the nucleus. It is found in the perinuclear region. It carries out the reaction GTP + H2O = GDP + phosphate + H(+). Functionally, interferon (IFN)-inducible GTPase that plays important roles in innate immunity against a diverse range of bacterial, viral and protozoan pathogens. Negatively regulates the antiviral response by inhibiting activation of IRF7 transcription factor. The protein is Guanylate-binding protein 4 of Homo sapiens (Human).